The sequence spans 424 residues: Splicing factor 3B subunit 4 (424 aa).

Alanine 2 is modified (N-acetylalanine). RRM domains are found at residues 13–91 (ATVY…KASA) and 100–179 (ANIF…YAFK). Tyrosine 56 carries the phosphotyrosine modification. The interval 207 to 424 (PHQLFADAPP…RGPLRGPLPQ (218 aa)) is disordered. Residues 222-231 (NPVVSSLGSG) show a composition bias toward low complexity. The segment covering 232–268 (LPPPGMPPPGSFPPPVPPPGALPPGIPPAMPPPPMPP) has biased composition (pro residues). Low complexity-rich tracts occupy residues 269-280 (GAAGHGPPSAGT) and 303-323 (HPGMSQMQLAHHGPHGLGHPH). Pro residues-rich tracts occupy residues 332 to 381 (QPPP…PLMP) and 388 to 424 (PPRPPPYGYQRGPLPPPRPTPRPPVPPRGPLRGPLPQ).

Belongs to the SF3B4 family. As to quaternary structure, component of the 17S U2 SnRNP complex, a ribonucleoprotein complex that contains small nuclear RNA (snRNA) U2 and a number of specific proteins. Part of the SF3B subcomplex of the 17S U2 SnRNP complex. SF3B associates with the splicing subcomplex SF3A and a 12S RNA unit to form the U2 small nuclear ribonucleoproteins complex (U2 snRNP). SF3B4 has been found in complex spliceosome 'B' and 'C' as well. Component of the minor (U12-type spliceosome) spliceosome. Found in a complex with PRMT9, SF3B2 and SF3B4.

It is found in the nucleus. Functionally, component of the 17S U2 SnRNP complex of the spliceosome, a large ribonucleoprotein complex that removes introns from transcribed pre-mRNAs. The 17S U2 SnRNP complex (1) directly participates in early spliceosome assembly and (2) mediates recognition of the intron branch site during pre-mRNA splicing by promoting the selection of the pre-mRNA branch-site adenosine, the nucleophile for the first step of splicing. Within the 17S U2 SnRNP complex, SF3B4 is part of the SF3B subcomplex, which is required for 'A' complex assembly formed by the stable binding of U2 snRNP to the branchpoint sequence in pre-mRNA. Sequence independent binding of SF3A and SF3B subcomplexes upstream of the branch site is essential, it may anchor U2 snRNP to the pre-mRNA. May also be involved in the assembly of the 'E' complex. Also acts as a component of the minor spliceosome, which is involved in the splicing of U12-type introns in pre-mRNAs. In Homo sapiens (Human), this protein is Splicing factor 3B subunit 4 (SF3B4).